A 220-amino-acid chain; its full sequence is MTDILDEVLSDQNEEKRLIFFKKLVPIIIIISIVVITIMVIIKNNKDNRIKNNQKNGDILVKTIGLDTTKDNKALAFNTLENLITSSNTKIKEIAALEQVAIRMSEKKYLGAKNLLNKIIDNEKYSEISTAYARIAWCCIVLDDQSLNIQDKGKLQKYLNYFDDEKKPFWATATIIKAILDIKHNMKTQAEKNLKNLLASNNVSDLLKDQAKALLVSLSK.

Residues 20–42 form a helical membrane-spanning segment; that stretch reads FFKKLVPIIIIISIVVITIMVII.

It localises to the membrane. This is an uncharacterized protein from Rickettsia prowazekii (strain Madrid E).